Consider the following 142-residue polypeptide: Large ribosomal subunit protein uL22c (142 aa).

It belongs to the universal ribosomal protein uL22 family. In terms of assembly, part of the 50S ribosomal subunit.

It is found in the plastid. The protein resides in the chloroplast. In terms of biological role, this protein binds specifically to 23S rRNA. The globular domain of the protein is located near the polypeptide exit tunnel on the outside of the subunit, while an extended beta-hairpin is found that lines the wall of the exit tunnel in the center of the 70S ribosome. The polypeptide is Large ribosomal subunit protein uL22c (rpl22) (Picea abies (Norway spruce)).